We begin with the raw amino-acid sequence, 343 residues long: MDPKGSLSWRILLFLSLAFELSYGTGGGVMDCPVILQKLGQDTWLPLTNEHQINKSVNKSVRILVTMATSPGSKSNKKIVSFDLSKGSYPDHLEDGYHFQSKNLSLKILGNRRESEGWYLVSVEENVSVQQFCKQLKLYEQVSPPEIKVLNKTQENENGTCSLLLACTVKKGDHVTYSWSDEAGTHLLSRANRSHLLHITLSNQHQDSIYNCTASNPVSSISRTFNLSSQACKQESSSESSPWMQYTLVPLGVVIIFILVFTAIIMMKRQGKSNHCQPPVEEKSLTIYAQVQKSGPQEKKLHDALTDQDPCTTIYVAATEPAPESVQEPNPTTVYASVTLPES.

Residues 1–24 form the signal peptide; it reads MDPKGSLSWRILLFLSLAFELSYG. At 25–242 the chain is on the extracellular side; sequence TGGGVMDCPV…KQESSSESSP (218 aa). The region spanning 29-138 is the Ig-like V-type domain; that stretch reads VMDCPVILQK…VQQFCKQLKL (110 aa). N-linked (GlcNAc...) asparagine glycosylation is found at asparagine 54, asparagine 58, asparagine 103, asparagine 126, asparagine 151, asparagine 158, asparagine 192, asparagine 211, and asparagine 226. The Ig-like C2-type domain occupies 145–228; the sequence is PEIKVLNKTQ…SSISRTFNLS (84 aa). Intrachain disulfides connect cysteine 161–cysteine 232 and cysteine 167–cysteine 212. A helical transmembrane segment spans residues 243–265; sequence WMQYTLVPLGVVIIFILVFTAII. Residues 266–343 lie on the Cytoplasmic side of the membrane; sequence MMKRQGKSNH…VYASVTLPES (78 aa). The short motif at 286–291 is the ITSM 1 element; that stretch reads TIYAQV. A phosphotyrosine; by FYN mark is found at tyrosine 288, tyrosine 315, and tyrosine 335. The short motif at 313–318 is the SH2-binding element; that stretch reads TIYVAA. Residues 320–343 are disordered; it reads EPAPESVQEPNPTTVYASVTLPES. Polar residues predominate over residues 327–343; that stretch reads QEPNPTTVYASVTLPES. The ITSM 2 motif lies at 333-338; sequence TVYASV.

In terms of assembly, interacts (via cytoplasmic domain) with SH2D1A and SH2D1B; SH2D1A mediates association with FYN; SH2D1A binds to phosphorylated and not phosphorylated ITSM 1. Interacts (via cytoplasmic domain phosphorylated on tyrosine residues) with INPP5D and PTPN11; presence of SH2D1A facilitates binding to INPP5D. Interacts with MAP4K1. Interacts with PIK3C3, BECN1 and UVRAG; indicative for an association with PI3K complex II (PI3KC3-C2). Post-translationally, phosphorylated on tyrosine residues by FYN.

Its subcellular location is the cell membrane. Its function is as follows. Self-ligand receptor of the signaling lymphocytic activation molecule (SLAM) family. SLAM receptors triggered by homo- or heterotypic cell-cell interactions are modulating the activation and differentiation of a wide variety of immune cells and thus are involved in the regulation and interconnection of both innate and adaptive immune response. Activities are controlled by presence or absence of small cytoplasmic adapter proteins, SH2D1A/SAP and/or SH2D1B/EAT-2. SLAMF1-induced signal-transduction events in T-lymphocytes are different from those in B-cells. Two modes of SLAMF1 signaling seem to exist: one depending on SH2D1A (and perhaps SH2D1B) and another in which protein-tyrosine phosphatase 2C (PTPN11)-dependent signal transduction operates. Initially it has been proposed that association with SH2D1A prevents binding to inhibitory effectors including INPP5D/SHIP1 and PTPN11/SHP-2. However, signaling is also regulated by SH2D1A which can simultaneously interact with and recruit FYN which subsequently phosphorylates and activates SLAMF1. Mediates IL-2-independent proliferation of activated T-cells during immune responses and induces IFN-gamma production. Downstreaming signaling involves INPP5D, DOK1 and DOK2 leading to inhibited IFN-gamma production in T-cells, and PRKCQ, BCL10 and NFKB1 leading to increased T-cell activation and Th2 cytokine production. Promotes T-cell receptor-induced IL-4 secretion by CD4(+) cells. Inhibits antigen receptor-mediated production of IFN-gamma, but not IL-2, in CD4(-)/CD8(-) T-cells. Required for IL-4 production by germinal centers T follicular helper (T(Fh))cells. May inhibit CD40-induced signal transduction in monocyte-derived dendritic cells. May play a role in allergic responses and may regulate allergen-induced Th2 cytokine and Th1 cytokine secretion. In conjunction with SLAMF6 controls the transition between positive selection and the subsequent expansion and differentiation of the thymocytic natural killer T (NKT) cell lineage. Involved in the peripheral differentiation of indifferent natural killer T (iNKT) cells toward a regulatory NKT2 type. In macrophages involved in down-regulation of IL-12, TNF-alpha and nitric oxide in response to lipopolysaccharide (LPS). In B-cells activates the ERK signaling pathway independently of SH2D1A but implicating both, SYK and INPP5D, and activates Akt signaling dependent on SYK and SH2D1A. In conjunction with CD84/SLAMF5 and SLAMF6 may be a negative regulator of the humoral immune response. Functionally, (Microbial infection) Involved in innate immune response against Gram-negative bacteria in macrophages; probably recognizes OmpC and/or OmpF on the bacterial surface, regulates phagosome maturation and recruitment of the PI3K complex II (PI3KC3-C2) leading to accumulated of PdtIns(3)P and NOX2 activity in the phagosomes. The chain is Signaling lymphocytic activation molecule (Slamf1) from Mus musculus (Mouse).